Consider the following 498-residue polypeptide: Bifunctional protein GlmU (498 aa).

A pyrophosphorylase region spans residues 1 to 238 (MSDAAVVILA…PALVAGVNDR (238 aa)). UDP-N-acetyl-alpha-D-glucosamine-binding positions include 9 to 12 (LAAG), K23, Q80, and 85 to 86 (GT). D111 lines the Mg(2+) pocket. UDP-N-acetyl-alpha-D-glucosamine contacts are provided by G148, E163, N178, and N236. Residue N236 participates in Mg(2+) binding. The linker stretch occupies residues 239-259 (VQLADLGAELNRRVVAAHQRA). An N-acetyltransferase region spans residues 260-498 (GVTIVDPATT…TAKPAPATGE (239 aa)). UDP-N-acetyl-alpha-D-glucosamine is bound by residues R341 and K359. Residue H371 is the Proton acceptor of the active site. UDP-N-acetyl-alpha-D-glucosamine contacts are provided by Y374 and N385. Acetyl-CoA is bound by residues A388, 394-395 (NY), S413, and A431. The segment at 470 to 498 (AAEAAAADGDTAAADRAAATAKPAPATGE) is disordered.

In the N-terminal section; belongs to the N-acetylglucosamine-1-phosphate uridyltransferase family. It in the C-terminal section; belongs to the transferase hexapeptide repeat family. Homotrimer. Requires Mg(2+) as cofactor.

It localises to the cytoplasm. The catalysed reaction is alpha-D-glucosamine 1-phosphate + acetyl-CoA = N-acetyl-alpha-D-glucosamine 1-phosphate + CoA + H(+). It catalyses the reaction N-acetyl-alpha-D-glucosamine 1-phosphate + UTP + H(+) = UDP-N-acetyl-alpha-D-glucosamine + diphosphate. It participates in nucleotide-sugar biosynthesis; UDP-N-acetyl-alpha-D-glucosamine biosynthesis; N-acetyl-alpha-D-glucosamine 1-phosphate from alpha-D-glucosamine 6-phosphate (route II): step 2/2. It functions in the pathway nucleotide-sugar biosynthesis; UDP-N-acetyl-alpha-D-glucosamine biosynthesis; UDP-N-acetyl-alpha-D-glucosamine from N-acetyl-alpha-D-glucosamine 1-phosphate: step 1/1. The protein operates within bacterial outer membrane biogenesis; LPS lipid A biosynthesis. In terms of biological role, catalyzes the last two sequential reactions in the de novo biosynthetic pathway for UDP-N-acetylglucosamine (UDP-GlcNAc). The C-terminal domain catalyzes the transfer of acetyl group from acetyl coenzyme A to glucosamine-1-phosphate (GlcN-1-P) to produce N-acetylglucosamine-1-phosphate (GlcNAc-1-P), which is converted into UDP-GlcNAc by the transfer of uridine 5-monophosphate (from uridine 5-triphosphate), a reaction catalyzed by the N-terminal domain. This is Bifunctional protein GlmU from Mycolicibacterium gilvum (strain PYR-GCK) (Mycobacterium gilvum (strain PYR-GCK)).